Reading from the N-terminus, the 480-residue chain is Krueppel-like factor 10 (480 aa).

Polar residues predominate over residues 1-12 (MLNFGASLQQAS). 3 disordered regions span residues 1–32 (MLNF…PWDK), 64–83 (VTPV…TPDL), and 97–146 (PSDF…APPL). The span at 14–32 (GKMELISEKSKEGAHPWDK) shows a compositional bias: basic and acidic residues. Ser-183 is subject to Phosphoserine. Residues 202–222 (AAVSPNRPKPEPSTAANGAEK) form a disordered region. A Phosphoserine modification is found at Ser-249. C2H2-type zinc fingers lie at residues 369–393 (HICS…VRTH), 399–423 (FSCS…RRTH), and 429–451 (FACP…ARRH).

Belongs to the Sp1 C2H2-type zinc-finger protein family. Post-translationally, ubiquitinated; mediated by SIAH1 and leading to its subsequent proteasomal degradation.

The protein resides in the nucleus. Its function is as follows. Transcriptional repressor which binds to the consensus sequence 5'-GGTGTG-3'. Regulates the circadian expression of genes involved in lipogenesis, gluconeogenesis, and glycolysis in the liver. Represses the expression of PCK2, a rate-limiting step enzyme of gluconeogenesis. May play a role in the cell cycle regulation. Plays a role in the regulation of the circadian clock; binds to the GC box sequence in the promoter of the core clock component ARTNL/BMAL1 and represses its transcriptional activity. In Rattus norvegicus (Rat), this protein is Krueppel-like factor 10 (Klf10).